The chain runs to 361 residues: Peptide chain release factor 1 (361 aa).

Gln-233 is modified (N5-methylglutamine). Over residues 280 to 293 (ERRKKEQERADSRR) the composition is skewed to basic and acidic residues. Residues 280–307 (ERRKKEQERADSRRGQVGSGDRSERIRT) are disordered.

Belongs to the prokaryotic/mitochondrial release factor family. Post-translationally, methylated by PrmC. Methylation increases the termination efficiency of RF1.

The protein resides in the cytoplasm. In terms of biological role, peptide chain release factor 1 directs the termination of translation in response to the peptide chain termination codons UAG and UAA. This Rickettsia massiliae (strain Mtu5) protein is Peptide chain release factor 1.